We begin with the raw amino-acid sequence, 326 residues long: Protein ORF5 in retron Ec67 (326 aa).

Residues 1–24 (MGKSKKNRAAATNQLKHKSQTSAE) form a disordered region. Over residues 10 to 24 (AATNQLKHKSQTSAE) the composition is skewed to polar residues.

The protein belongs to the phage portal family. PBSX subfamily.

In Escherichia coli, this protein is Protein ORF5 in retron Ec67.